Here is a 3108-residue protein sequence, read N- to C-terminus: Probable polyketide synthase 39 (3108 aa).

The Ketosynthase family 3 (KS3) domain maps to D9–E440. Active-site for beta-ketoacyl synthase activity residues include C181, H320, and H363. The segment at G643–Y676 is acyl/malonyl transferase. S653 (for acyl/malonyl transferase activity) is an active-site residue. The tract at residues H939–I1068 is N-terminal hotdog fold. Positions H939 to S1265 constitute a PKS/mFAS DH domain. H980 serves as the catalytic Proton acceptor; for dehydratase activity. The C-terminal hotdog fold stretch occupies residues N1085–S1265. D1157 (proton donor; for dehydratase activity) is an active-site residue. The tract at residues N1375–N1435 is disordered. The Carrier domain maps to G2566–L2643. At S2603 the chain carries O-(pantetheine 4'-phosphoryl)serine. Residues I2702–M2722 traverse the membrane as a helical segment.

Pantetheine 4'-phosphate is required as a cofactor.

The protein resides in the membrane. In terms of biological role, probable polyketide synthase. The protein is Probable polyketide synthase 39 (pks39) of Dictyostelium discoideum (Social amoeba).